The chain runs to 134 residues: uncharacterized protein (134 aa).

The chain crosses the membrane as a helical span at residues 13–35 (FFIAFSAYLVVILLMTAVSVYYL).

It is found in the membrane. This is an uncharacterized protein from Archaeoglobus fulgidus (strain ATCC 49558 / DSM 4304 / JCM 9628 / NBRC 100126 / VC-16).